Consider the following 111-residue polypeptide: Nucleoid-associated protein PputW619_3586 (111 aa).

The disordered stretch occupies residues 87-111; sequence EQSSQEKMGGMTAGMQLPPGFKMPF.

The protein belongs to the YbaB/EbfC family. As to quaternary structure, homodimer.

It localises to the cytoplasm. It is found in the nucleoid. Functionally, binds to DNA and alters its conformation. May be involved in regulation of gene expression, nucleoid organization and DNA protection. The protein is Nucleoid-associated protein PputW619_3586 of Pseudomonas putida (strain W619).